Reading from the N-terminus, the 122-residue chain is Large ribosomal subunit protein uL14 (122 aa).

The protein belongs to the universal ribosomal protein uL14 family. As to quaternary structure, part of the 50S ribosomal subunit. Forms a cluster with proteins L3 and L19. In the 70S ribosome, L14 and L19 interact and together make contacts with the 16S rRNA in bridges B5 and B8.

Binds to 23S rRNA. Forms part of two intersubunit bridges in the 70S ribosome. This Microcystis aeruginosa (strain NIES-843 / IAM M-2473) protein is Large ribosomal subunit protein uL14.